The following is a 252-amino-acid chain: Pyridoxine 5'-phosphate synthase (252 aa).

Residue asparagine 7 participates in 3-amino-2-oxopropyl phosphate binding. 9-10 (DH) contacts 1-deoxy-D-xylulose 5-phosphate. 3-amino-2-oxopropyl phosphate is bound at residue arginine 18. Catalysis depends on histidine 43, which acts as the Proton acceptor. Residues arginine 45 and histidine 50 each coordinate 1-deoxy-D-xylulose 5-phosphate. Glutamate 70 serves as the catalytic Proton acceptor. Threonine 100 provides a ligand contact to 1-deoxy-D-xylulose 5-phosphate. Histidine 190 functions as the Proton donor in the catalytic mechanism. Residues glycine 191 and 212 to 213 (GH) each bind 3-amino-2-oxopropyl phosphate.

The protein belongs to the PNP synthase family. Homooctamer; tetramer of dimers.

The protein localises to the cytoplasm. It catalyses the reaction 3-amino-2-oxopropyl phosphate + 1-deoxy-D-xylulose 5-phosphate = pyridoxine 5'-phosphate + phosphate + 2 H2O + H(+). The protein operates within cofactor biosynthesis; pyridoxine 5'-phosphate biosynthesis; pyridoxine 5'-phosphate from D-erythrose 4-phosphate: step 5/5. In terms of biological role, catalyzes the complicated ring closure reaction between the two acyclic compounds 1-deoxy-D-xylulose-5-phosphate (DXP) and 3-amino-2-oxopropyl phosphate (1-amino-acetone-3-phosphate or AAP) to form pyridoxine 5'-phosphate (PNP) and inorganic phosphate. The polypeptide is Pyridoxine 5'-phosphate synthase (Synechococcus sp. (strain RCC307)).